Consider the following 383-residue polypeptide: Schlafen-like protein 3 (383 aa).

The SLFN-like fold stretch occupies residues 118-266 (FDYQSNFSDV…SDKVYQISSG (149 aa)). The helical transmembrane segment at 354-374 (LLDIQNIGWIFFGTALSFCIY) threads the bilayer.

Belongs to the Schlafen family. As to quaternary structure, component of the PUCH (precursor of 21U RNA 5'-end cleavage holoenzyme) complex; consisting of tofu-1, tofu-2 and either slfl-3 or slfl-4. Within the complex, interacts (via N-terminus) with tofu-2 (via N-terminus); the presence of tofu-1 is required for the interaction.

The protein resides in the mitochondrion membrane. Component of the trimeric PUCH (precursor of 21U RNA 5'-end cleavage holoenzyme) complex, that acts as an endoribonuclease processing the 5'-end of precursor Piwi-interacting RNAs (piRNAs). The PUCH complex consists of tofu-1, tofu-2 and either slfl-3 or slfl-4, where tofu-2 exhibits endoribonuclease activity. PUCH-mediated processing strictly requires a 7-methyl-G cap (m7 G-cap) and an uracil at position three (U3). PUCH also exhibits a strict bias for piRNA precursors with an A or G at position 1. Mature piRNA production is enhanced by the interaction of PUCH with the PETISCO complex, which is stabilizing piRNA precursors and allows their processing by PUCH. The protein is Schlafen-like protein 3 of Caenorhabditis elegans.